We begin with the raw amino-acid sequence, 148 residues long: Large ribosomal subunit protein bL9 (148 aa).

The protein belongs to the bacterial ribosomal protein bL9 family.

In terms of biological role, binds to the 23S rRNA. In Staphylococcus aureus (strain bovine RF122 / ET3-1), this protein is Large ribosomal subunit protein bL9.